The primary structure comprises 277 residues: Myelin proteolipid protein (277 aa).

Residues Gly2–Cys10 lie on the Cytoplasmic side of the membrane. 3 S-palmitoyl cysteine lipidation sites follow: Cys6, Cys7, and Cys10. The helical transmembrane segment at Leu11–Gly36 threads the bilayer. Topologically, residues His37–Glu59 are extracellular. Residues Phe60–Ala88 form a helical membrane-spanning segment. The Cytoplasmic segment spans residues Glu89–Lys151. 3 S-palmitoyl cysteine lipidation sites follow: Cys109, Cys139, and Cys141. A helical membrane pass occupies residues Phe152 to Phe178. The Extracellular segment spans residues Asn179–His238. Cystine bridges form between Cys184-Cys228 and Cys201-Cys220. The O-palmitoyl threonine moiety is linked to residue Thr199. The helical transmembrane segment at Leu239–Leu268 threads the bilayer. At Arg269–Phe277 the chain is on the cytoplasmic side.

It belongs to the myelin proteolipid protein family.

Its subcellular location is the cell membrane. In terms of biological role, this is the major myelin protein from the central nervous system. It plays an important role in the formation or maintenance of the multilamellar structure of myelin. The polypeptide is Myelin proteolipid protein (PLP1) (Taeniopygia guttata (Zebra finch)).